Here is a 318-residue protein sequence, read N- to C-terminus: Probable cell division protein WhiA (318 aa).

Positions 281–314 (SLKELGEMLSPPVGKSGVNHRLRRIEKIAEELSK) form a DNA-binding region, H-T-H motif.

It belongs to the WhiA family.

In terms of biological role, involved in cell division and chromosome segregation. The chain is Probable cell division protein WhiA from Clostridium tetani (strain Massachusetts / E88).